Consider the following 354-residue polypeptide: Kelch domain-containing protein 8B (354 aa).

Kelch repeat units lie at residues 1-31, 32-79, 81-127, 128-175, 176-222, 224-281, 282-329, and 331-354; these read MAAGGGRAFAWQVFPPMPTCRVYGTVAHQDG, HLLV…VLGK, VLVV…ERDG, MVYA…LHGN, KIYV…MAEG, VFSL…SLGG, NIVA…QAGP, and LFVIGGVAQGPSQAVEALCLRDGV.

The protein localises to the cytoplasm. It is found in the midbody. Involved in pinching off the separated nuclei at the cleavage furrow and in cytokinesis. Required for mitotic integrity and maintenance of chromosomal stability. Protects cells against mitotic errors, centrosomal amplification, micronucleus formation and aneuploidy. Plays a key role of midbody function involving abscission of the daughter cells during cytokinesis and appropriate chromosomal and nuclear segregation into the daughter cells. This chain is Kelch domain-containing protein 8B (Klhdc8b), found in Mus musculus (Mouse).